The chain runs to 765 residues: Probable dipeptidyl peptidase 4 (765 aa).

Residues 1–14 (MKWSILLLVGCAAA) form the signal peptide. N-linked (GlcNAc...) asparagine glycans are attached at residues N35, N78, N101, N110, N169, N218, N465, and N490. S613 serves as the catalytic Charge relay system. N665 is a glycosylation site (N-linked (GlcNAc...) asparagine). Catalysis depends on charge relay system residues D690 and H725.

Belongs to the peptidase S9B family.

It is found in the secreted. It carries out the reaction Release of an N-terminal dipeptide, Xaa-Yaa-|-Zaa-, from a polypeptide, preferentially when Yaa is Pro, provided Zaa is neither Pro nor hydroxyproline.. In terms of biological role, extracellular dipeptidyl-peptidase which removes N-terminal dipeptides sequentially from polypeptides having unsubstituted N-termini provided that the penultimate residue is proline. Contributes to pathogenicity. The polypeptide is Probable dipeptidyl peptidase 4 (dpp4) (Aspergillus fumigatus (strain ATCC MYA-4609 / CBS 101355 / FGSC A1100 / Af293) (Neosartorya fumigata)).